Here is a 548-residue protein sequence, read N- to C-terminus: Probable 5-epi-aristolochene synthase 4 (548 aa).

Mg(2+) contacts are provided by Asp301, Asp305, Asp444, Thr448, and Glu452. A DDXXD motif motif is present at residues 301–305 (DDTFD).

This sequence belongs to the terpene synthase family. Monomer. Mg(2+) is required as a cofactor.

The protein resides in the cytoplasm. It carries out the reaction (2E,6E)-farnesyl diphosphate = (+)-5-epi-aristolochene + diphosphate. It participates in secondary metabolite biosynthesis; terpenoid biosynthesis. Functionally, catalyzes the cyclization of trans,trans-farnesyl diphosphate (FPP) to the bicyclic intermediate 5-epi-aristolochene, initial step in the conversion of FPP to the sesquiterpenoid antifungal phytoalexin capsidiol. Produces germacrene A as an enzyme-bound intermediate that is not released by the enzyme, but is further cyclized to produce the bicyclic 5-epi-aristolochene. This Nicotiana attenuata (Coyote tobacco) protein is Probable 5-epi-aristolochene synthase 4.